A 729-amino-acid polypeptide reads, in one-letter code: DNA topoisomerase 3 (729 aa).

In terms of domain architecture, Toprim spans 3–136; that stretch reads KSVVIAEKPS…IKRLWISSVT (134 aa). Mg(2+)-binding residues include Glu-9 and Asp-105. Positions 153-594 constitute a Topo IA-type catalytic domain; sequence YDNLYASAVA…EMKNYTKEIV (442 aa). Residues 187-192 form an interaction with DNA region; sequence NCGRVQ. Tyr-310 (O-(5'-phospho-DNA)-tyrosine intermediate) is an active-site residue. The segment covering 686-713 has biased composition (basic and acidic residues); sequence ERRKKESGNKADKRDVQKYMKQQKKEEE. The segment at 686-718 is disordered; sequence ERRKKESGNKADKRDVQKYMKQQKKEEEPLNNP.

The protein belongs to the type IA topoisomerase family. The cofactor is Mg(2+).

It catalyses the reaction ATP-independent breakage of single-stranded DNA, followed by passage and rejoining.. Functionally, releases the supercoiling and torsional tension of DNA, which is introduced during the DNA replication and transcription, by transiently cleaving and rejoining one strand of the DNA duplex. Introduces a single-strand break via transesterification at a target site in duplex DNA. The scissile phosphodiester is attacked by the catalytic tyrosine of the enzyme, resulting in the formation of a DNA-(5'-phosphotyrosyl)-enzyme intermediate and the expulsion of a 3'-OH DNA strand. The free DNA strand then undergoes passage around the unbroken strand, thus removing DNA supercoils. Finally, in the religation step, the DNA 3'-OH attacks the covalent intermediate to expel the active-site tyrosine and restore the DNA phosphodiester backbone. The sequence is that of DNA topoisomerase 3 from Bacillus cereus (strain ZK / E33L).